An 899-amino-acid polypeptide reads, in one-letter code: Core protein VP3 (899 aa).

The segment at 1 to 21 is disordered; sequence MADPPDANVPKTSPYLKGDEL.

It belongs to the orbivirus VP3 family.

The protein localises to the virion. Its function is as follows. The VP3 protein is one of the five proteins (with VP1, VP4, VP6 and VP7) which form the inner capsid of the virus. This Epizootic hemorrhagic disease virus 1 (EHDV-1) protein is Core protein VP3 (Segment-3).